Consider the following 217-residue polypeptide: MNNPEFWHNKWAANQIGFHLEDVNPLLIKFWEKTEPNYEKSVFVPLCGKSEDLIWLATKHEEVQGVELSQIAVRAFFAEHLYTPTVTQISGQHELYQFDELNIYTGDYFTAPIQPVDTIYDRASLVALPAEIRAQYVERLKQLLKPGGKILLVTLDYDQSEMAGPPFSVPKLEIDQLFAGYKITLLNQDIADDEHPKIAKKGLSRFSEEVYLIESEA.

4 residues coordinate S-adenosyl-L-methionine: tryptophan 11, leucine 46, glutamate 67, and arginine 122.

It belongs to the class I-like SAM-binding methyltransferase superfamily. TPMT family.

Its subcellular location is the cytoplasm. The enzyme catalyses S-adenosyl-L-methionine + a thiopurine = S-adenosyl-L-homocysteine + a thiopurine S-methylether.. The sequence is that of Thiopurine S-methyltransferase from Vibrio atlanticus (strain LGP32) (Vibrio splendidus (strain Mel32)).